The sequence spans 631 residues: 1-deoxy-D-xylulose-5-phosphate synthase (631 aa).

Residues His-87 and 128–130 each bind thiamine diphosphate; that span reads GHS. Asp-159 provides a ligand contact to Mg(2+). Thiamine diphosphate is bound by residues 160–161, Asn-188, Phe-295, and Glu-377; that span reads GA. Residue Asn-188 participates in Mg(2+) binding.

This sequence belongs to the transketolase family. DXPS subfamily. As to quaternary structure, homodimer. It depends on Mg(2+) as a cofactor. Thiamine diphosphate is required as a cofactor.

The catalysed reaction is D-glyceraldehyde 3-phosphate + pyruvate + H(+) = 1-deoxy-D-xylulose 5-phosphate + CO2. Its pathway is metabolic intermediate biosynthesis; 1-deoxy-D-xylulose 5-phosphate biosynthesis; 1-deoxy-D-xylulose 5-phosphate from D-glyceraldehyde 3-phosphate and pyruvate: step 1/1. Its function is as follows. Catalyzes the acyloin condensation reaction between C atoms 2 and 3 of pyruvate and glyceraldehyde 3-phosphate to yield 1-deoxy-D-xylulose-5-phosphate (DXP). The protein is 1-deoxy-D-xylulose-5-phosphate synthase of Pseudomonas entomophila (strain L48).